Here is a 754-residue protein sequence, read N- to C-terminus: Probable galactinol--sucrose galactosyltransferase 1 (754 aa).

It belongs to the glycosyl hydrolases 36 family.

It carries out the reaction alpha-D-galactosyl-(1-&gt;3)-1D-myo-inositol + sucrose = raffinose + myo-inositol. Its function is as follows. Transglycosidase operating by a ping-pong reaction mechanism. Involved in the synthesis of raffinose, a major soluble carbohydrate in seeds, roots and tubers. This is Probable galactinol--sucrose galactosyltransferase 1 (RFS1) from Arabidopsis thaliana (Mouse-ear cress).